The sequence spans 1143 residues: Condensin-2 complex subunit G2 (1143 aa).

Residue serine 30 is modified to Phosphoserine. The stretch at 460-498 (LLPALRYSLHDNSEKVRVAFVDMLLKIKAVRAAKFWKIC) is one HEAT repeat. 2 positions are modified to phosphothreonine: threonine 805 and threonine 1119.

In terms of assembly, component of the condensin-2 complex, which contains the SMC2 and SMC4 heterodimer, and 3 non SMC subunits that probably regulate the complex: NCAPH2, NCAPD3 and NCAPG2.

It localises to the nucleus. Functionally, regulatory subunit of the condensin-2 complex, a complex which establishes mitotic chromosome architecture and is involved in physical rigidity of the chromatid axis. This Homo sapiens (Human) protein is Condensin-2 complex subunit G2 (NCAPG2).